The sequence spans 239 residues: 2,3,4,5-tetrahydropyridine-2,6-dicarboxylate N-acetyltransferase (239 aa).

Belongs to the transferase hexapeptide repeat family. DapH subfamily.

It catalyses the reaction (S)-2,3,4,5-tetrahydrodipicolinate + acetyl-CoA + H2O = L-2-acetamido-6-oxoheptanedioate + CoA. The protein operates within amino-acid biosynthesis; L-lysine biosynthesis via DAP pathway; LL-2,6-diaminopimelate from (S)-tetrahydrodipicolinate (acetylase route): step 1/3. Functionally, catalyzes the transfer of an acetyl group from acetyl-CoA to tetrahydrodipicolinate. This Staphylococcus aureus (strain Newman) protein is 2,3,4,5-tetrahydropyridine-2,6-dicarboxylate N-acetyltransferase.